A 314-amino-acid polypeptide reads, in one-letter code: DNA-directed RNA polymerase subunit alpha (314 aa).

Positions 1–227 (MTTFEIECIE…ELLFPLKEIN (227 aa)) are alpha N-terminal domain (alpha-NTD). An alpha C-terminal domain (alpha-CTD) region spans residues 237–314 (IEDSKINQIL…LPKEKTSKSN (78 aa)).

Belongs to the RNA polymerase alpha chain family. As to quaternary structure, in plastids the minimal PEP RNA polymerase catalytic core is composed of four subunits: alpha, beta, beta', and beta''. When a (nuclear-encoded) sigma factor is associated with the core the holoenzyme is formed, which can initiate transcription.

The protein resides in the plastid. Its subcellular location is the chloroplast. The enzyme catalyses RNA(n) + a ribonucleoside 5'-triphosphate = RNA(n+1) + diphosphate. In terms of biological role, DNA-dependent RNA polymerase catalyzes the transcription of DNA into RNA using the four ribonucleoside triphosphates as substrates. The sequence is that of DNA-directed RNA polymerase subunit alpha from Pyrenomonas salina.